Reading from the N-terminus, the 320-residue chain is o-succinylbenzoate synthase (320 aa).

The active-site Proton donor is K133. Mg(2+) is bound by residues D161, E190, and D213. Residue K235 is the Proton acceptor of the active site.

It belongs to the mandelate racemase/muconate lactonizing enzyme family. MenC type 1 subfamily. A divalent metal cation is required as a cofactor.

The catalysed reaction is (1R,6R)-6-hydroxy-2-succinyl-cyclohexa-2,4-diene-1-carboxylate = 2-succinylbenzoate + H2O. It functions in the pathway quinol/quinone metabolism; 1,4-dihydroxy-2-naphthoate biosynthesis; 1,4-dihydroxy-2-naphthoate from chorismate: step 4/7. The protein operates within quinol/quinone metabolism; menaquinone biosynthesis. Converts 2-succinyl-6-hydroxy-2,4-cyclohexadiene-1-carboxylate (SHCHC) to 2-succinylbenzoate (OSB). This Salmonella agona (strain SL483) protein is o-succinylbenzoate synthase.